The chain runs to 710 residues: DNA ligase (710 aa).

The disordered stretch occupies residues 1 to 36 (MTSSSPRHADPDENPYVEAPPTDFEPVGALSEDEAT). NAD(+) is bound by residues 63–67 (DETYD), 111–112 (SI), and glutamate 147. Lysine 149 functions as the N6-AMP-lysine intermediate in the catalytic mechanism. 3 residues coordinate NAD(+): arginine 170, glutamate 206, and lysine 353. Residues cysteine 444, cysteine 447, cysteine 460, and cysteine 466 each contribute to the Zn(2+) site. Positions 623-710 (ETGDALDGLT…ERGVAWPPEE (88 aa)) constitute a BRCT domain. The interval 657-689 (ATSSVSGNTDYLVAGESPGRSKRDDADAEGVPV) is disordered.

The protein belongs to the NAD-dependent DNA ligase family. LigA subfamily. The cofactor is Mg(2+). Requires Mn(2+) as cofactor.

The enzyme catalyses NAD(+) + (deoxyribonucleotide)n-3'-hydroxyl + 5'-phospho-(deoxyribonucleotide)m = (deoxyribonucleotide)n+m + AMP + beta-nicotinamide D-nucleotide.. DNA ligase that catalyzes the formation of phosphodiester linkages between 5'-phosphoryl and 3'-hydroxyl groups in double-stranded DNA using NAD as a coenzyme and as the energy source for the reaction. It is essential for DNA replication and repair of damaged DNA. This chain is DNA ligase, found in Halorubrum lacusprofundi (strain ATCC 49239 / DSM 5036 / JCM 8891 / ACAM 34).